Consider the following 374-residue polypeptide: Mannitol-1-phosphate 5-dehydrogenase (374 aa).

3 to 14 provides a ligand contact to NAD(+); the sequence is AIHFGAGNIGRG.

It belongs to the mannitol dehydrogenase family.

The catalysed reaction is D-mannitol 1-phosphate + NAD(+) = beta-D-fructose 6-phosphate + NADH + H(+). The protein is Mannitol-1-phosphate 5-dehydrogenase of Halalkalibacterium halodurans (strain ATCC BAA-125 / DSM 18197 / FERM 7344 / JCM 9153 / C-125) (Bacillus halodurans).